The following is a 64-amino-acid chain: MKASELNEKSVDELKQELLTQLEAQFKLRMQKSTGQLNQTHLVKQTRRDIARIKTVLRQKAATK.

The protein belongs to the universal ribosomal protein uL29 family.

This Teredinibacter turnerae (strain ATCC 39867 / T7901) protein is Large ribosomal subunit protein uL29.